The primary structure comprises 541 residues: MFFTKPRLHRIITHNLHHLLSPHLLLSEISGSLGDLGTLLPLLLALSLQGSIDLPSTLLFSGLFNILTGLVFGVPLPVQPMKAIAAASLQENADLETTVAAGAWVGFAVLLLGGTGGLKRVMRWVPGAVVRGVQVGAGMSLVVAAGGGMVRPLGWLWTPEENENGHGGLGEWLDSRALAVLAFGGLVVGLGQQQQQQQQSGEKPQERRKKRSKMPVQVPYALVLFLVGIMFAVVRVSLSKDSPQSPPPPPHDQPTNSAPPWTWIWNPLNHIHPKVFRSLLNPQALSMAIAQLPLTTLNSIIAASALASDLFPPDSYPQLYADDESSDSPLSPSPSASSSSLSSAPPQTPSAETPKPLSSPTSAEEGPVPLTPLSLSISAMNLLSAPFGCMPLCHGSGGLAAQHRFGARSGTSIILLGLTKFLLGLFFPGPGLLGLLGKFPKAFLGVMVLGAGVELARVGVRNVEGEEQDRMVMLMTAGTILAFKNDGVGFLAGMGCYGGFRVAAWLGGGTEKGRGGEQGLLGEEEEEEEQGRVDEESPLLR.

5 consecutive transmembrane segments (helical) span residues Leu24–Leu44, Leu58–Val78, Thr98–Leu118, Ala137–Trp157, and Gly168–Val188. The disordered stretch occupies residues Gln193–Lys213. Transmembrane regions (helical) follow at residues Met214–Val234 and Met287–Ala307. The tract at residues Pro317–Gly366 is disordered. The span at Asp327 to Ala351 shows a compositional bias: low complexity. 2 consecutive transmembrane segments (helical) span residues Ile413–Leu433 and Leu435–Leu455. The disordered stretch occupies residues Thr510–Arg541.

Belongs to the SLC26A/SulP transporter (TC 2.A.53) family.

It localises to the vacuole membrane. Exports stored molybdate from the vacuole into the cytosol, making it available for molybdate cofactor (Moco) biosynthesis. Plays a role in molybdate homeostasis as high cytosolic levels of molybdate are toxic to cells. Not required for molybdate import into cells. This chain is Molybdate transporter 1, found in Neurospora crassa (strain ATCC 24698 / 74-OR23-1A / CBS 708.71 / DSM 1257 / FGSC 987).